The following is a 249-amino-acid chain: Esterase YjfP (249 aa).

In terms of biological role, displays esterase activity toward palmitoyl-CoA and pNP-butyrate. The sequence is that of Esterase YjfP (yjfP) from Escherichia coli (strain K12).